Here is a 278-residue protein sequence, read N- to C-terminus: Envelope glycoprotein L (278 aa).

The first 32 residues, M1–A32, serve as a signal peptide directing secretion. Positions V43–E256 constitute a gL betaherpesvirus-type domain. C154 and C159 are oxidised to a cystine.

Belongs to the herpesviridae glycoprotein L (gL) family. Betaherpesvirinae gL subfamily. As to quaternary structure, interacts with glycoprotein H (gH); this interaction is necessary for the correct processing and cell surface expression of gH. Forms the envelope pentamer complex (PC) composed of gH, gL, UL128, UL130, and UL131A. The pentamer interacts with host NRP2. Forms the envelope trimer complex composed of gH, gL, and gO. The trimer interacts with host PDGFRA. The trimer also interacts with host EPHA2.

The protein resides in the virion membrane. It localises to the host cell membrane. Its subcellular location is the host Golgi apparatus. It is found in the host trans-Golgi network. The heterodimer glycoprotein H-glycoprotein L is required for the fusion of viral and plasma membranes leading to virus entry into the host cell. Acts as a functional inhibitor of gH and maintains gH in an inhibited form. Upon binding to host integrins, gL dissociates from gH leading to activation of the viral fusion glycoproteins gB and gH. In human cytomegalovirus, forms two distincts complexes to mediate viral entry, a trimer and a pentamer at the surface of the virion envelope. The gH-gL-gO trimer is required for infection in fibroblasts by interacting with host PDGFRA, and in glioblastoma cells by interacting with host EPHA2. The gH-gL-UL128-UL130-UL131A pentamer is essential for viral entry in epithelial, endothelial and myeloid cells via interaction with host NRP2. The chain is Envelope glycoprotein L from Human cytomegalovirus (strain 119) (HHV-5).